A 239-amino-acid polypeptide reads, in one-letter code: mRNA turnover protein 4 homolog (239 aa).

Residues 215–239 (FQQMGDDLPESASESTEESDSEDDD) are disordered. Ser225, Ser229, and Ser233 each carry phosphoserine. A compositionally biased stretch (acidic residues) spans 229 to 239 (STEESDSEDDD).

The protein belongs to the universal ribosomal protein uL10 family. As to quaternary structure, associates with the pre-60S ribosomal particle. Interacts with MINAS-60 (product of an alternative open reading frame of RBM10).

Its subcellular location is the nucleus. The protein resides in the nucleolus. The protein localises to the cytoplasm. Its function is as follows. Component of the ribosome assembly machinery. Nuclear paralog of the ribosomal protein P0, it binds pre-60S subunits at an early stage of assembly in the nucleolus, and is replaced by P0 in cytoplasmic pre-60S subunits and mature 80S ribosomes. The sequence is that of mRNA turnover protein 4 homolog (MRTO4) from Homo sapiens (Human).